A 505-amino-acid chain; its full sequence is Maturase K (505 aa).

The protein belongs to the intron maturase 2 family. MatK subfamily.

The protein resides in the plastid. The protein localises to the chloroplast. Its function is as follows. Usually encoded in the trnK tRNA gene intron. Probably assists in splicing its own and other chloroplast group II introns. The chain is Maturase K from Morus indica (Mulberry).